The primary structure comprises 158 residues: 2-C-methyl-D-erythritol 2,4-cyclodiphosphate synthase (158 aa).

The a divalent metal cation site is built by Asp9 and His11. 4-CDP-2-C-methyl-D-erythritol 2-phosphate contacts are provided by residues 9-11 (DVH) and 35-36 (HS). His43 serves as a coordination point for a divalent metal cation. Residues 57–59 (DIG), 62–66 (FPDTD), 101–107 (AQKPKMA), 133–136 (TTTE), Phe140, and Arg143 contribute to the 4-CDP-2-C-methyl-D-erythritol 2-phosphate site.

The protein belongs to the IspF family. As to quaternary structure, homotrimer. A divalent metal cation serves as cofactor.

It carries out the reaction 4-CDP-2-C-methyl-D-erythritol 2-phosphate = 2-C-methyl-D-erythritol 2,4-cyclic diphosphate + CMP. Its pathway is isoprenoid biosynthesis; isopentenyl diphosphate biosynthesis via DXP pathway; isopentenyl diphosphate from 1-deoxy-D-xylulose 5-phosphate: step 4/6. Involved in the biosynthesis of isopentenyl diphosphate (IPP) and dimethylallyl diphosphate (DMAPP), two major building blocks of isoprenoid compounds. Catalyzes the conversion of 4-diphosphocytidyl-2-C-methyl-D-erythritol 2-phosphate (CDP-ME2P) to 2-C-methyl-D-erythritol 2,4-cyclodiphosphate (ME-CPP) with a corresponding release of cytidine 5-monophosphate (CMP). The chain is 2-C-methyl-D-erythritol 2,4-cyclodiphosphate synthase from Bacillus licheniformis (strain ATCC 14580 / DSM 13 / JCM 2505 / CCUG 7422 / NBRC 12200 / NCIMB 9375 / NCTC 10341 / NRRL NRS-1264 / Gibson 46).